A 335-amino-acid polypeptide reads, in one-letter code: Leukocyte cell-derived chemotaxin 1 (335 aa).

Residues 45–65 (VVLISGAVLLLLGAIGAFYFW) traverse the membrane as a helical segment. One can recognise a BRICHOS domain in the interval 104 to 201 (GSGAEEAVEV…LCGDLPIFWL (98 aa)). Cys131 and Cys193 form a disulfide bridge. Positions 211-214 (RERR) are excised as a propeptide. Positions 221-269 (VTTTTTRRLRSGPQGTPAPGRPNNGTRPSVQEDAEPFNPDNPYHQQEGE) are disordered. Thr223 is a glycosylation site (N-linked (GlcNAc...) asparagine; in variant 223-N-E-224). Thr236 carries an O-linked (GalNAc...) threonine; partial glycan. An N-linked (GlcNAc...) asparagine glycan is attached at Asn244. Intrachain disulfides connect Cys283-Cys287, Cys284-Cys324, Cys294-Cys318, and Cys298-Cys314.

It belongs to the chondromodulin-1 family. In terms of processing, after cleavage, the post-translationally modified ChM-I is secreted as a glycoprotein. Post-translationally, two other smaller nonglycosylated chondromodulin forms (9 kDa and 7 kDa) are found either in developing articular cartilage or in chondrocytes. The 9 kDa form could be processed by an extracellular matrix-associated protease as a metalloproteinase and the 7 kDa form could be processed intracellularly. As to expression, nasal and articular cartilage, and fetal epiphysis.

It is found in the secreted. The protein resides in the extracellular space. It localises to the extracellular matrix. The protein localises to the endomembrane system. Bifunctional growth regulator that stimulates the growth of cultured chondrocytes in the presence of basic fibroblast growth factor (FGF) but inhibits the growth of cultured vascular endothelial cells. May contribute to the rapid growth of cartilage and vascular invasion prior to the replacement of cartilage by bone during endochondral bone development. Inhibits in vitro tube formation and mobilization of endothelial cells. Plays a role as antiangiogenic factor in cardiac valves to suppress neovascularization. In Bos taurus (Bovine), this protein is Leukocyte cell-derived chemotaxin 1.